Here is a 118-residue protein sequence, read N- to C-terminus: Ribosome-binding factor A (118 aa).

It belongs to the RbfA family. Monomer. Binds 30S ribosomal subunits, but not 50S ribosomal subunits or 70S ribosomes.

The protein resides in the cytoplasm. Its function is as follows. One of several proteins that assist in the late maturation steps of the functional core of the 30S ribosomal subunit. Associates with free 30S ribosomal subunits (but not with 30S subunits that are part of 70S ribosomes or polysomes). Required for efficient processing of 16S rRNA. May interact with the 5'-terminal helix region of 16S rRNA. This is Ribosome-binding factor A from Bacillus cereus (strain ATCC 10987 / NRS 248).